Reading from the N-terminus, the 511-residue chain is Probable DNA ligase (511 aa).

Glu-208 serves as a coordination point for ATP. Lys-210 functions as the N6-AMP-lysine intermediate in the catalytic mechanism. 6 residues coordinate ATP: Arg-215, Arg-230, Glu-259, Phe-299, Arg-377, and Lys-383.

It belongs to the ATP-dependent DNA ligase family. Requires Mg(2+) as cofactor.

It carries out the reaction ATP + (deoxyribonucleotide)n-3'-hydroxyl + 5'-phospho-(deoxyribonucleotide)m = (deoxyribonucleotide)n+m + AMP + diphosphate.. Its function is as follows. DNA ligase that seals nicks in double-stranded DNA during DNA replication, DNA recombination and DNA repair. The polypeptide is Probable DNA ligase (Streptomyces griseus subsp. griseus (strain JCM 4626 / CBS 651.72 / NBRC 13350 / KCC S-0626 / ISP 5235)).